The chain runs to 4462 residues: Dynein axonemal heavy chain 17 (4462 aa).

The interval 1–1808 (MTMAPDVRLE…FANICDAQIQ (1808 aa)) is stem. 2 TPR repeats span residues 1019–1052 (TWTD…VSKC) and 1702–1736 (IWWT…QLNV). AAA regions lie at residues 1809–2030 (YSYE…VLVV), 2090–2311 (KIIK…FGFK), 2417–2665 (ELDP…IFQG), and 2763–3012 (SYNE…ERRY). Residues 1847 to 1854 (GPAGTGKT), 2128 to 2135 (GNAGSGKS), 2455 to 2462 (GNAGTGKS), and 2801 to 2808 (GVGGSGKQ) contribute to the ATP site. Coiled-coil stretches lie at residues 3027–3086 (YQNL…LIQV) and 3257–3309 (DVAP…EKIK). The stalk stretch occupies residues 3027–3313 (YQNLLAKKRT…TAEKIKCQQE (287 aa)). AAA stretches follow at residues 3405–3632 (LTDD…EIEE) and 3842–4068 (IKNF…VLYN). The TPR 3 repeat unit spans residues 4147-4182 (PESPYLYGLHPNAEIGFLTVTSEKLFRTVLEMQPKE).

Belongs to the dynein heavy chain family. Consists of at least two heavy chains and a number of intermediate and light chains. In terms of tissue distribution, expressed in testis. Expressed in spermatozoa (at protein level). Not detected in airway epithelial cells (at protein level).

The protein localises to the cytoplasm. It is found in the cytoskeleton. It localises to the flagellum axoneme. Force generating protein component of the outer dynein arms (ODAs) in the sperm flagellum. Produces force towards the minus ends of microtubules. Dynein has ATPase activity; the force-producing power stroke is thought to occur on release of ADP. Plays a major role in sperm motility, implicated in sperm flagellar assembly and beating. The polypeptide is Dynein axonemal heavy chain 17 (Homo sapiens (Human)).